A 391-amino-acid chain; its full sequence is 1-acyl-sn-glycerol-3-phosphate acyltransferase 2 (391 aa).

The chain crosses the membrane as a helical span at residues 3–23 (MAAAAVIVPLGILFFISGLVV). The HXXXXD motif signature appears at 92 to 97 (HRSDID). Transmembrane regions (helical) follow at residues 306 to 326 (LAVV…FLHW) and 334 to 354 (KGIA…QILI). The disordered stretch occupies residues 358–391 (QSERSTPAKVAPAKPKDKHQSGSSSQTEVEEKQK).

Belongs to the 1-acyl-sn-glycerol-3-phosphate acyltransferase family.

It localises to the endoplasmic reticulum membrane. The enzyme catalyses a 1-acyl-sn-glycero-3-phosphate + an acyl-CoA = a 1,2-diacyl-sn-glycero-3-phosphate + CoA. It participates in phospholipid metabolism; CDP-diacylglycerol biosynthesis; CDP-diacylglycerol from sn-glycerol 3-phosphate: step 2/3. Its function is as follows. Converts lysophosphatidic acid (LPA) into phosphatidic acid by incorporating acyl moiety at the 2 position. The sequence is that of 1-acyl-sn-glycerol-3-phosphate acyltransferase 2 (LPAT2) from Brassica oleracea (Wild cabbage).